A 309-amino-acid chain; its full sequence is tRNA pseudouridine synthase B (309 aa).

Asp-40 (nucleophile) is an active-site residue.

The protein belongs to the pseudouridine synthase TruB family. Type 1 subfamily.

It catalyses the reaction uridine(55) in tRNA = pseudouridine(55) in tRNA. Its function is as follows. Responsible for synthesis of pseudouridine from uracil-55 in the psi GC loop of transfer RNAs. In Mycobacterium avium (strain 104), this protein is tRNA pseudouridine synthase B.